Reading from the N-terminus, the 232-residue chain is tRNA (guanine-N(7)-)-methyltransferase (232 aa).

Residues glutamate 38, aspartate 63, glutamate 90, and aspartate 113 each coordinate S-adenosyl-L-methionine. Aspartate 113 is an active-site residue. The substrate site is built by lysine 117 and aspartate 149.

The protein belongs to the class I-like SAM-binding methyltransferase superfamily. TrmB family.

It catalyses the reaction guanosine(46) in tRNA + S-adenosyl-L-methionine = N(7)-methylguanosine(46) in tRNA + S-adenosyl-L-homocysteine. The protein operates within tRNA modification; N(7)-methylguanine-tRNA biosynthesis. Functionally, catalyzes the formation of N(7)-methylguanine at position 46 (m7G46) in tRNA. In Syntrophotalea carbinolica (strain DSM 2380 / NBRC 103641 / GraBd1) (Pelobacter carbinolicus), this protein is tRNA (guanine-N(7)-)-methyltransferase.